We begin with the raw amino-acid sequence, 329 residues long: MAP kinase-activated protein kinase 2 (329 aa).

Residues 1 to 7 (LGINGKV) and lysine 22 each bind ATP. The Protein kinase domain maps to 1 to 254 (LGINGKVLRI…ITEFMNHPWI (254 aa)). 68-70 (ECL) contributes to the staurosporine binding site. The active-site Proton acceptor is the aspartate 115. Position 151 is a phosphothreonine; by MAPK14 (threonine 151). Position 201 is a phosphoserine; by MAPK14 (serine 201). Serine 257 is subject to Phosphoserine; by autocatalysis. The autoinhibitory helix stretch occupies residues 257–293 (STKVPQTPLHTSRVLKEDKERWEDVKEEMTSALATMR). A Phosphothreonine; by MAPK14 modification is found at threonine 263. Lysine 282 is covalently cross-linked (Glycyl lysine isopeptide (Lys-Gly) (interchain with G-Cter in SUMO)). The short motif at 285-294 (MTSALATMRV) is the Nuclear export signal (NES) element. The p38 MAPK-binding site stretch occupies residues 295–319 (DYEQIKIKKIEDASNPLLLKRRKKA). Short sequence motifs (bipartite nuclear localization signal) lie at residues 300–303 (KIKK) and 314–318 (KRRKK).

This sequence belongs to the protein kinase superfamily. CAMK Ser/Thr protein kinase family. In terms of assembly, heterodimer with p38-alpha/MAPK14; this heterodimer forms a stable complex: molecules are positioned 'face to face' so that the ATP-binding sites of both kinases are at the heterodimer interface. Interacts with PHC2. Interacts with HSF1. Post-translationally, sumoylation inhibits the protein kinase activity. In terms of processing, phosphorylated and activated by MAP kinase p38-alpha/MAPK14 at Thr-151, Ser-201 and Thr-263.

The protein localises to the cytoplasm. It localises to the nucleus. The catalysed reaction is L-seryl-[protein] + ATP = O-phospho-L-seryl-[protein] + ADP + H(+). The enzyme catalyses L-threonyl-[protein] + ATP = O-phospho-L-threonyl-[protein] + ADP + H(+). With respect to regulation, activated following phosphorylation by p38-alpha/MAPK14 following various stresses. Inhibited following sumoylation. Specifically inhibited by pyrrolopyridine inhibitors. Functionally, stress-activated serine/threonine-protein kinase involved in cytokine production, endocytosis, reorganization of the cytoskeleton, cell migration, cell cycle control, chromatin remodeling, DNA damage response and transcriptional regulation. Following stress, it is phosphorylated and activated by MAP kinase p38-alpha/MAPK14, leading to phosphorylation of substrates. Phosphorylates serine in the peptide sequence, Hyd-X-R-X(2)-S, where Hyd is a large hydrophobic residue. Phosphorylates ALOX5, CDC25B, CDC25C, CEP131, ELAVL1, HNRNPA0, HSP27/HSPB1, KRT18, KRT20, LIMK1, LSP1, PABPC1, PARN, PDE4A, RCSD1, RPS6KA3, TAB3 and TTP/ZFP36. Phosphorylates HSF1; leading to the interaction with HSP90 proteins and inhibiting HSF1 homotrimerization, DNA-binding and transactivation activities. Mediates phosphorylation of HSP27/HSPB1 in response to stress, leading to the dissociation of HSP27/HSPB1 from large small heat-shock protein (sHsps) oligomers and impairment of their chaperone activities and ability to protect against oxidative stress effectively. Involved in inflammatory response by regulating tumor necrosis factor (TNF) and IL6 production post-transcriptionally: acts by phosphorylating AU-rich elements (AREs)-binding proteins ELAVL1, HNRNPA0, PABPC1 and TTP/ZFP36, leading to regulation of the stability and translation of TNF and IL6 mRNAs. Phosphorylation of TTP/ZFP36, a major post-transcriptional regulator of TNF, promotes its binding to 14-3-3 proteins and reduces its ARE mRNA affinity, leading to inhibition of dependent degradation of ARE-containing transcripts. Phosphorylates CEP131 in response to cellular stress following ultraviolet irradiation which promotes binding of CEP131 to 14-3-3 proteins and inhibits formation of novel centriolar satellites. Also involved in late G2/M checkpoint following DNA damage through a process of post-transcriptional mRNA stabilization: following DNA damage, relocalizes from nucleus to cytoplasm and phosphorylates HNRNPA0 and PARN, leading to stabilization of GADD45A mRNA. Involved in toll-like receptor signaling pathway (TLR) in dendritic cells: required for acute TLR-induced macropinocytosis by phosphorylating and activating RPS6KA3. In Cricetulus longicaudatus (Long-tailed dwarf hamster), this protein is MAP kinase-activated protein kinase 2 (MAPKAPK2).